Here is a 183-residue protein sequence, read N- to C-terminus: Protein jagunal homolog 1 (183 aa).

At Met1 to Lys39 the chain is on the cytoplasmic side. At Ser3 the chain carries Phosphoserine. Residues Leu40 to Leu60 traverse the membrane as a helical segment. Over Arg61–Pro71 the chain is Lumenal. Residues Tyr72–Phe92 traverse the membrane as a helical segment. At Pro93 to Asn96 the chain is on the cytoplasmic side. The chain crosses the membrane as a helical span at residues Ile97 to Tyr117. Over Gly118–Arg137 the chain is Lumenal. A helical membrane pass occupies residues Phe138 to Val158. Topologically, residues His159–Lys183 are cytoplasmic.

This sequence belongs to the jagunal family. In terms of assembly, interacts with COPA, COPB2 and COPG2.

The protein resides in the endoplasmic reticulum membrane. Functionally, endoplasmic reticulum transmembrane protein involved in vesicle-mediated transport, which is required for neutrophil function. Required for vesicle-mediated transport; it is however unclear whether it is involved in early secretory pathway or intracellular protein transport. Acts as a regulator of neutrophil function, probably via its role in vesicle-mediated transport: required for defense against fungal pathogens and for granulocyte colony-stimulating factor (GM-CSF) signaling pathway; possibly by regulating glycosylation and/or targeting of proteins contributing to the viability and migration of neutrophils. This chain is Protein jagunal homolog 1, found in Mus musculus (Mouse).